The following is a 292-amino-acid chain: NAD kinase (292 aa).

The active-site Proton acceptor is aspartate 73. Residues 73-74 (DG), 147-148 (NE), histidine 158, arginine 175, aspartate 177, 188-193 (TGYSLS), and glutamine 247 each bind NAD(+).

This sequence belongs to the NAD kinase family. It depends on a divalent metal cation as a cofactor.

Its subcellular location is the cytoplasm. The catalysed reaction is NAD(+) + ATP = ADP + NADP(+) + H(+). In terms of biological role, involved in the regulation of the intracellular balance of NAD and NADP, and is a key enzyme in the biosynthesis of NADP. Catalyzes specifically the phosphorylation on 2'-hydroxyl of the adenosine moiety of NAD to yield NADP. In Buchnera aphidicola subsp. Acyrthosiphon pisum (strain 5A), this protein is NAD kinase.